The following is a 113-amino-acid chain: Iron-sulfur cluster insertion protein ErpA (113 aa).

3 residues coordinate iron-sulfur cluster: Cys41, Cys105, and Cys107.

This sequence belongs to the HesB/IscA family. Homodimer. It depends on iron-sulfur cluster as a cofactor.

Required for insertion of 4Fe-4S clusters for at least IspG. The polypeptide is Iron-sulfur cluster insertion protein ErpA (Actinobacillus succinogenes (strain ATCC 55618 / DSM 22257 / CCUG 43843 / 130Z)).